Here is a 335-residue protein sequence, read N- to C-terminus: Adenosine deaminase (335 aa).

Zn(2+)-binding residues include H12 and H14. H14 and D16 together coordinate substrate. H197 contributes to the Zn(2+) binding site. E200 acts as the Proton donor in catalysis. D278 serves as a coordination point for Zn(2+).

Belongs to the metallo-dependent hydrolases superfamily. Adenosine and AMP deaminases family. Adenosine deaminase subfamily. Requires Zn(2+) as cofactor.

The catalysed reaction is adenosine + H2O + H(+) = inosine + NH4(+). It carries out the reaction 2'-deoxyadenosine + H2O + H(+) = 2'-deoxyinosine + NH4(+). Its function is as follows. Catalyzes the hydrolytic deamination of adenosine and 2-deoxyadenosine. The protein is Adenosine deaminase of Clostridium botulinum (strain Loch Maree / Type A3).